A 663-amino-acid chain; its full sequence is DNA topoisomerase 1 (663 aa).

The region spanning 4–137 (SWLIITEKDN…TVKVDRVRYS (134 aa)) is the Toprim domain. Residues Glu10 and Asp106 each coordinate Mg(2+). Positions 155-558 (DFNLANAALA…ESREMLLQIL (404 aa)) constitute a Topo IA-type catalytic domain. The interaction with DNA stretch occupies residues 193-198 (SVGRVQ). The active-site O-(5'-phospho-DNA)-tyrosine intermediate is the Tyr306. Residues 583–610 (CPECGGELVVRQSKAGKRFIGCSNYPDC) form a C4-type 1 zinc finger. A C4-type 2; atypical zinc finger spans residues 629-653 (CKEHEIKEVKIRTKKGYWNLGCPYC).

Belongs to the type IA topoisomerase family. As to quaternary structure, monomer. Requires Mg(2+) as cofactor.

It catalyses the reaction ATP-independent breakage of single-stranded DNA, followed by passage and rejoining.. Its function is as follows. Releases the supercoiling and torsional tension of DNA, which is introduced during the DNA replication and transcription, by transiently cleaving and rejoining one strand of the DNA duplex. Introduces a single-strand break via transesterification at a target site in duplex DNA. The scissile phosphodiester is attacked by the catalytic tyrosine of the enzyme, resulting in the formation of a DNA-(5'-phosphotyrosyl)-enzyme intermediate and the expulsion of a 3'-OH DNA strand. The free DNA strand then undergoes passage around the unbroken strand, thus removing DNA supercoils. Finally, in the religation step, the DNA 3'-OH attacks the covalent intermediate to expel the active-site tyrosine and restore the DNA phosphodiester backbone. In Archaeoglobus fulgidus (strain ATCC 49558 / DSM 4304 / JCM 9628 / NBRC 100126 / VC-16), this protein is DNA topoisomerase 1.